The following is an 820-amino-acid chain: Leucine-rich repeat and guanylate kinase domain-containing protein (820 aa).

Positions 72-83 (EAEAEQEEKQQE) are enriched in basic and acidic residues. Residues 72–96 (EAEAEQEEKQQEDGESEESEESEMQ) are disordered. Positions 84 to 94 (DGESEESEESE) are enriched in acidic residues. LRR repeat units lie at residues 129-149 (YLNLNLSHCELVDISILCGYV), 150-171 (HLQKLNLSGNRIEDLSCVSCMP), 172-193 (YLLELNASQNKLTTFFNFKPPQ), 194-215 (NLKKVDFSSNLISEMYDLSAYH), 216-237 (TLTQLILDNNEIEEITGLENCI), 238-259 (SLTHLSLAGNKITTIKGLGTLP), 260-280 (IKVLSLSNNMIETITGLEELK), 281-302 (ALQNLDLSHNQISSLQGLENHD), and 303-324 (LLEVINLEDNKIKELSEIEYIE). Residues 337–375 (NPIQTKPEYWFFVIYMLLRLTELDQQKIKVEEKVFAVNK) form the LRRCT domain. Residues 414–597 (YPMLILTGPA…AYQKLSELIR (184 aa)) enclose the Guanylate kinase-like domain. 421-428 (GPAACGKR) is an ATP binding site. The interval 800 to 820 (TIMDPGSNTKPTLPPIPHGRR) is disordered. Pro residues predominate over residues 811–820 (TLPPIPHGRR).

Interacts (via guanylate kinase-like domain) with RIMBP3 (via coiled-coil region). Interacts (via guanylate kinase-like domain) with HOOK2. Interacts (via LRRCT domain) with KLC3. Interacts with HOOK1 and HOOK3. Highly expressed in the testis. During spermatid development is initially localized to a supra-nuclear region of round spermatids, and is particularly evident at the leading edge of the developing acrosome and acroplaxome. As maturation proceeded and nuclear elongation initiated, LRGUK moves distally to ultimately reside on the microtubules of the manchette. LRGUK is also evident in the sperm basal body and the sperm tail.

It is found in the cytoplasmic vesicle. It localises to the secretory vesicle. The protein localises to the acrosome. The protein resides in the cytoplasm. Its subcellular location is the cytoskeleton. It is found in the cilium basal body. Functionally, involved in multiple aspects of sperm assembly including acrosome attachment, shaping of the sperm head and in the early aspects of axoneme development. Not essential for primary cilium biogenesis. This is Leucine-rich repeat and guanylate kinase domain-containing protein (Lrguk) from Mus musculus (Mouse).